The chain runs to 229 residues: MSEKENNFPPLPKFIPVKPCFYQNFSDEIPVEHQVLVKRIYRLWMFYCATLGVNLIACLAWWIGGGSGTNFGLAFVWLLLFTPCGYVCWFRPVYKAFRADSSFNFMAFFFIFGAQFVLTVIQAIGFSGWGACGWLSAIGFFQYSPGAAVVMLLPAIMFSVSAAMMAIAIMKVHRIYRGAGGSFQKAQTEWNTGTWRNPPSREAQYNNFSGNSLPEYPTVPSYPGSGQWP.

The Cytoplasmic segment spans residues Met-1–Arg-39. Helical transmembrane passes span Ile-40–Ala-60, Trp-61–Phe-81, Phe-105–Gly-125, and Val-149–Ile-169. At Met-170 to Pro-229 the chain is on the cytoplasmic side. Thr-194 carries the phosphothreonine modification. The tract at residues Phe-208–Pro-229 is disordered.

It belongs to the SCAMP family.

The protein localises to the membrane. Probably involved in membrane protein trafficking. This is Secretory carrier-associated membrane protein 4 (SCAMP4) from Homo sapiens (Human).